A 567-amino-acid chain; its full sequence is Dihydroxy-acid dehydratase 2 (567 aa).

Cys-56 contributes to the [2Fe-2S] cluster binding site. Residue Asp-88 participates in Mg(2+) binding. Cys-129 is a [2Fe-2S] cluster binding site. Mg(2+)-binding residues include Asp-130 and Lys-131. Residue Lys-131 is modified to N6-carboxylysine. Cys-206 contacts [2Fe-2S] cluster. Glu-457 is a binding site for Mg(2+). Ser-483 (proton acceptor) is an active-site residue.

The protein belongs to the IlvD/Edd family. As to quaternary structure, homodimer. Requires [2Fe-2S] cluster as cofactor. The cofactor is Mg(2+).

It carries out the reaction (2R)-2,3-dihydroxy-3-methylbutanoate = 3-methyl-2-oxobutanoate + H2O. The catalysed reaction is (2R,3R)-2,3-dihydroxy-3-methylpentanoate = (S)-3-methyl-2-oxopentanoate + H2O. Its pathway is amino-acid biosynthesis; L-isoleucine biosynthesis; L-isoleucine from 2-oxobutanoate: step 3/4. It functions in the pathway amino-acid biosynthesis; L-valine biosynthesis; L-valine from pyruvate: step 3/4. In terms of biological role, functions in the biosynthesis of branched-chain amino acids. Catalyzes the dehydration of (2R,3R)-2,3-dihydroxy-3-methylpentanoate (2,3-dihydroxy-3-methylvalerate) into 2-oxo-3-methylpentanoate (2-oxo-3-methylvalerate) and of (2R)-2,3-dihydroxy-3-methylbutanoate (2,3-dihydroxyisovalerate) into 2-oxo-3-methylbutanoate (2-oxoisovalerate), the penultimate precursor to L-isoleucine and L-valine, respectively. The chain is Dihydroxy-acid dehydratase 2 from Corynebacterium efficiens (strain DSM 44549 / YS-314 / AJ 12310 / JCM 11189 / NBRC 100395).